Consider the following 755-residue polypeptide: PWWP domain-containing protein 2A (755 aa).

Residues 1–15 (MAAVAAEAAATAASP) are compositionally biased toward low complexity. The interval 1–153 (MAAVAAEAAA…VPPAGGDSTV (153 aa)) is disordered. The segment covering 64-76 (DEPPLPPPPPPPG) has biased composition (pro residues). Phosphoserine is present on residues serine 81, serine 102, serine 116, and serine 119. Pro residues predominate over residues 112-126 (ELPPSPASPPEQPPA). The segment at 148 to 373 (GGDSTVSQLI…KLKTDHKVDG (226 aa)) is interaction with HDAC1 and MTA1. Residue lysine 208 forms a Glycyl lysine isopeptide (Lys-Gly) (interchain with G-Cter in SUMO2) linkage. 4 disordered regions span residues 282–301 (YNQS…KRKM), 334–384 (KEIR…KRNA), 400–562 (KVSA…GSKN), and 578–626 (SSAS…SKEE). A compositionally biased stretch (basic residues) spans 292–301 (RKIKRPKRKM). Composition is skewed to basic and acidic residues over residues 346-356 (SKYEDKKRRNE) and 368-381 (DHKV…ESQK). Residues 403–421 (AQANTSKAQLSTKKVLQSK) are compositionally biased toward polar residues. A compositionally biased stretch (basic and acidic residues) spans 422–444 (NMDHAKAREVLKIAKEKAQKKQN). Residues 423-574 (MDHAKAREVL…SVYMTLNQKK (152 aa)) are interaction with the H2A.Z/H2AZ1. Residues 508–527 (SRCTSTRSAGEAPSENQSPS) show a composition bias toward polar residues. A compositionally biased stretch (low complexity) spans 593-603 (SSNSECSSSES). The region spanning 655–715 (VGDIVWAKIY…LSQLSPFLEN (61 aa)) is the PWWP domain.

As to quaternary structure, component of a MTA1-specific subcomplex of the NuRD complex (M1HR), composed of PWWP2A, MTA1/2, HDAC1/2, and RBBP4/7 but does not contain CHD4 and MBD3. Interacts with MTA1; the interaction mediates the association of PWWP2A with the M1HR complex. Interacts with H2A.Z/H2AZ1. Interacts (via PWWP domain) with histone H3 trimethylated at 'Lys-36' (H3K36me3). Does not interact with CHD4 and MBD3. Interacts with MTA1 and with HDAC1 in a MTA1-dependent manner. Does not interact with CHD4 and MBD3.

The protein resides in the nucleus. Functionally, chromatin-binding protein that acts as an adapter between distinct nucleosome components (H3K36me3 or H2A.Z) and chromatin-modifying complexes, contributing to the regulation of the levels of histone acetylation at actively transcribed genes. Competes with CHD4 and MBD3 for interaction with MTA1 to form a NuRD subcomplex, preventing the formation of full NuRD complex (containing CHD4 and MBD3), leading to recruitment of HDACs to gene promoters resulting in turn in the deacetylation of nearby H3K27 and H2A.Z. Plays a role in facilitating transcriptional elongation and repression of spurious transcription initiation through regulation of histone acetylation. Essential for proper mitosis progression. The sequence is that of PWWP domain-containing protein 2A (PWWP2A) from Homo sapiens (Human).